A 418-amino-acid chain; its full sequence is Glutamyl-tRNA reductase (418 aa).

Residues Thr-49–Arg-52, Ser-109, Glu-114–Gln-116, and Gln-120 contribute to the substrate site. Cys-50 functions as the Nucleophile in the catalytic mechanism. Position 189–194 (Gly-189–Ile-194) interacts with NADP(+).

It belongs to the glutamyl-tRNA reductase family. As to quaternary structure, homodimer.

The catalysed reaction is (S)-4-amino-5-oxopentanoate + tRNA(Glu) + NADP(+) = L-glutamyl-tRNA(Glu) + NADPH + H(+). It participates in porphyrin-containing compound metabolism; protoporphyrin-IX biosynthesis; 5-aminolevulinate from L-glutamyl-tRNA(Glu): step 1/2. Functionally, catalyzes the NADPH-dependent reduction of glutamyl-tRNA(Glu) to glutamate 1-semialdehyde (GSA). The chain is Glutamyl-tRNA reductase from Escherichia coli O9:H4 (strain HS).